A 200-amino-acid polypeptide reads, in one-letter code: HTH-type transcriptional regulator BetI (200 aa).

The region spanning 8-68 (SIRKQQLIQA…AAMRHIQYQL (61 aa)) is the HTH tetR-type domain. The segment at residues 31-50 (SIALIARKAGVSNGIISHYF) is a DNA-binding region (H-T-H motif).

It functions in the pathway amine and polyamine biosynthesis; betaine biosynthesis via choline pathway [regulation]. Repressor involved in the biosynthesis of the osmoprotectant glycine betaine. It represses transcription of the choline transporter BetT and the genes of BetAB involved in the synthesis of glycine betaine. The polypeptide is HTH-type transcriptional regulator BetI (Proteus mirabilis (strain HI4320)).